Here is a 277-residue protein sequence, read N- to C-terminus: 2-dehydro-3-deoxyphosphooctonate aldolase (277 aa).

It belongs to the KdsA family.

The protein resides in the cytoplasm. The enzyme catalyses D-arabinose 5-phosphate + phosphoenolpyruvate + H2O = 3-deoxy-alpha-D-manno-2-octulosonate-8-phosphate + phosphate. Its pathway is carbohydrate biosynthesis; 3-deoxy-D-manno-octulosonate biosynthesis; 3-deoxy-D-manno-octulosonate from D-ribulose 5-phosphate: step 2/3. It functions in the pathway bacterial outer membrane biogenesis; lipopolysaccharide biosynthesis. The polypeptide is 2-dehydro-3-deoxyphosphooctonate aldolase (Dichelobacter nodosus (strain VCS1703A)).